A 767-amino-acid polypeptide reads, in one-letter code: Photosystem I P700 chlorophyll a apoprotein A1 (767 aa).

Helical transmembrane passes span 72–95 (IFSA…FHGA), 158–181 (LMSL…FHYH), 197–221 (LNHH…HVSL), 305–323 (IAHH…GHMY), 364–387 (WHAQ…QHMY), 403–429 (IGLF…IAMI), 451–473 (ALIS…LYIH), and 548–566 (FMVH…LILL). [4Fe-4S] cluster contacts are provided by cysteine 590 and cysteine 599. The next 2 helical transmembrane spans lie at 606–627 (HVFL…HFSW) and 681–703 (TSAY…MFLF). Histidine 692 provides a ligand contact to chlorophyll a'. Positions 700 and 708 each coordinate chlorophyll a. Tryptophan 709 provides a ligand contact to phylloquinone. Residues 741 to 761 (AVGVAHYLLGGIATTWAFFHA) form a helical membrane-spanning segment.

Belongs to the PsaA/PsaB family. As to quaternary structure, the PsaA/B heterodimer binds the P700 chlorophyll special pair and subsequent electron acceptors. PSI consists of a core antenna complex that captures photons, and an electron transfer chain that converts photonic excitation into a charge separation. The cyanobacterial PSI reaction center is composed of one copy each of PsaA,B,C,D,E,F,I,J,K,L,M and X, and forms trimeric complexes. Requires PSI electron transfer chain: 5 chlorophyll a, 1 chlorophyll a', 2 phylloquinones and 3 4Fe-4S clusters. PSI core antenna: 90 chlorophyll a, 22 carotenoids, 3 phospholipids and 1 galactolipid. P700 is a chlorophyll a/chlorophyll a' dimer, A0 is one or more chlorophyll a, A1 is one or both phylloquinones and FX is a shared 4Fe-4S iron-sulfur center. as cofactor.

It localises to the cellular thylakoid membrane. The enzyme catalyses reduced [plastocyanin] + hnu + oxidized [2Fe-2S]-[ferredoxin] = oxidized [plastocyanin] + reduced [2Fe-2S]-[ferredoxin]. PsaA and PsaB bind P700, the primary electron donor of photosystem I (PSI), as well as the electron acceptors A0, A1 and FX. PSI is a plastocyanin/cytochrome c6-ferredoxin oxidoreductase, converting photonic excitation into a charge separation, which transfers an electron from the donor P700 chlorophyll pair to the spectroscopically characterized acceptors A0, A1, FX, FA and FB in turn. Oxidized P700 is reduced on the lumenal side of the thylakoid membrane by plastocyanin or cytochrome c6. This is Photosystem I P700 chlorophyll a apoprotein A1 from Synechococcus sp. (strain WH7803).